A 59-amino-acid polypeptide reads, in one-letter code: Cytochrome c oxidase subunit 9, mitochondrial (59 aa).

Residues 2 to 8 lie on the Mitochondrial matrix side of the membrane; that stretch reads TIAPITG. The helical transmembrane segment at 9–44 threads the bilayer; the sequence is TIKRRVIMDIVLGFSLGGVMASYWWWGFHMDKINKR. Residues 45 to 56 lie on the Mitochondrial intermembrane side of the membrane; sequence EKFYAELAERKK. Positions 57–59 are cleaved as a propeptide — removed in mature form; it reads QEN.

The protein belongs to the fungal cytochrome c oxidase subunit 7a family. In terms of assembly, component of the cytochrome c oxidase (complex IV, CIV), a multisubunit enzyme composed of 12 subunits. The complex is composed of a catalytic core of 3 subunits COX1, COX2 and COX3, encoded in the mitochondrial DNA, and 9 supernumerary subunits COX4, COX5A (or COX5B), COX6, COX7, COX8, COX9, COX12, COX13 and COX26, which are encoded in the nuclear genome. The complex exists as a monomer or a dimer and forms supercomplexes (SCs) in the inner mitochondrial membrane with a dimer of ubiquinol-cytochrome c oxidoreductase (cytochrome b-c1 complex, complex III, CIII), resulting in 2 different assemblies (supercomplexes III(2)IV and III(2)IV(2)).

It localises to the mitochondrion inner membrane. The protein operates within energy metabolism; oxidative phosphorylation. Functionally, component of the cytochrome c oxidase, the last enzyme in the mitochondrial electron transport chain which drives oxidative phosphorylation. The respiratory chain contains 3 multisubunit complexes succinate dehydrogenase (complex II, CII), ubiquinol-cytochrome c oxidoreductase (cytochrome b-c1 complex, complex III, CIII) and cytochrome c oxidase (complex IV, CIV), that cooperate to transfer electrons derived from NADH and succinate to molecular oxygen, creating an electrochemical gradient over the inner membrane that drives transmembrane transport and the ATP synthase. Cytochrome c oxidase is the component of the respiratory chain that catalyzes the reduction of oxygen to water. Electrons originating from reduced cytochrome c in the intermembrane space (IMS) are transferred via the dinuclear copper A center (CU(A)) of COX2 and heme A of COX1 to the active site in COX1, a binuclear center (BNC) formed by heme A3 and copper B (CU(B)). The BNC reduces molecular oxygen to 2 water molecules using 4 electrons from cytochrome c in the IMS and 4 protons from the mitochondrial matrix. The polypeptide is Cytochrome c oxidase subunit 9, mitochondrial (COX9) (Saccharomyces cerevisiae (strain ATCC 204508 / S288c) (Baker's yeast)).